The sequence spans 417 residues: Serine hydroxymethyltransferase (417 aa).

Residues Leu117 and 121-123 contribute to the (6S)-5,6,7,8-tetrahydrofolate site; that span reads GHL. Lys226 bears the N6-(pyridoxal phosphate)lysine mark.

The protein belongs to the SHMT family. As to quaternary structure, homodimer. Requires pyridoxal 5'-phosphate as cofactor.

The protein localises to the cytoplasm. The catalysed reaction is (6R)-5,10-methylene-5,6,7,8-tetrahydrofolate + glycine + H2O = (6S)-5,6,7,8-tetrahydrofolate + L-serine. Its pathway is one-carbon metabolism; tetrahydrofolate interconversion. It participates in amino-acid biosynthesis; glycine biosynthesis; glycine from L-serine: step 1/1. Catalyzes the reversible interconversion of serine and glycine with tetrahydrofolate (THF) serving as the one-carbon carrier. This reaction serves as the major source of one-carbon groups required for the biosynthesis of purines, thymidylate, methionine, and other important biomolecules. Also exhibits THF-independent aldolase activity toward beta-hydroxyamino acids, producing glycine and aldehydes, via a retro-aldol mechanism. The chain is Serine hydroxymethyltransferase from Shouchella clausii (strain KSM-K16) (Alkalihalobacillus clausii).